The sequence spans 383 residues: Succinyl-diaminopimelate desuccinylase (383 aa).

Position 73 (His-73) interacts with Zn(2+). Asp-75 is a catalytic residue. Asp-107 is a binding site for Zn(2+). Glu-141 serves as the catalytic Proton acceptor. 3 residues coordinate Zn(2+): Glu-142, Glu-170, and His-356.

This sequence belongs to the peptidase M20A family. DapE subfamily. As to quaternary structure, homodimer. The cofactor is Zn(2+). Co(2+) serves as cofactor.

It catalyses the reaction N-succinyl-(2S,6S)-2,6-diaminopimelate + H2O = (2S,6S)-2,6-diaminopimelate + succinate. The protein operates within amino-acid biosynthesis; L-lysine biosynthesis via DAP pathway; LL-2,6-diaminopimelate from (S)-tetrahydrodipicolinate (succinylase route): step 3/3. Its function is as follows. Catalyzes the hydrolysis of N-succinyl-L,L-diaminopimelic acid (SDAP), forming succinate and LL-2,6-diaminopimelate (DAP), an intermediate involved in the bacterial biosynthesis of lysine and meso-diaminopimelic acid, an essential component of bacterial cell walls. The protein is Succinyl-diaminopimelate desuccinylase of Pseudomonas putida (strain ATCC 700007 / DSM 6899 / JCM 31910 / BCRC 17059 / LMG 24140 / F1).